Consider the following 403-residue polypeptide: Presqualene diphosphate synthase (403 aa).

Positions 84, 87, and 88 each coordinate Mg(2+).

It belongs to the phytoene/squalene synthase family. Mg(2+) is required as a cofactor.

It carries out the reaction 2 (2E,6E)-farnesyl diphosphate = presqualene diphosphate + diphosphate. Functionally, catalyzes the biosynthesis of presqualene diphosphate (PSPP). Works in combination with SSL-2 or SSL-3 to produce respectively squalene or botryococcene. In most other species, farnesyl diphosphate (FPP) is converted into squalene in a two-step reaction by a single enzyme. This Botryococcus braunii (Green alga) protein is Presqualene diphosphate synthase (SSL-1).